We begin with the raw amino-acid sequence, 388 residues long: Cell adhesion molecule 4 (388 aa).

A signal peptide spans 1–20 (MGRARRFQWPLLLLWAAAAG). The Ig-like V-type domain occupies 21 to 119 (PGTGQEVQTE…DTHHQIATLT (99 aa)). The Extracellular portion of the chain corresponds to 25 to 324 (QEVQTENVTV…VEAQTSVPYA (300 aa)). N31 and N67 each carry an N-linked (GlcNAc...) asparagine glycan. Cystine bridges form between C44/C104, C145/C199, and C245/C291. Ig-like C2-type domains follow at residues 124–219 (PENP…YVLD) and 224–307 (PTAR…YVLV). N-linked (GlcNAc...) asparagine glycosylation is present at N286. Residues 325-345 (IVGGILALLVFLIICVLVGMV) form a helical membrane-spanning segment. The Cytoplasmic segment spans residues 346–388 (WCSVRQKGSYLTHEASGLDEQGEAREAFLNGGDGHKRKEEFFI). The residue at position 361 (S361) is a Phosphoserine.

This sequence belongs to the nectin family. As to quaternary structure, monomer and homodimer. N-glycosylated. In terms of tissue distribution, expressed in the brain and several organs including the kidney and liver.

The protein localises to the membrane. Involved in the cell-cell adhesion. Has calcium- and magnesium-independent cell-cell adhesion activity. May have tumor-suppressor activity. In Mus musculus (Mouse), this protein is Cell adhesion molecule 4 (Cadm4).